A 96-amino-acid polypeptide reads, in one-letter code: MSPKNNHDPSSSGDSGNTNVQEADLQEMEDVNNSLDALSCALDAVEQRTDDIMSQLRELLNSNREIRRLIAEENDNAPESGDDNMDGQAGSEAAPK.

Disordered stretches follow at residues 1-28 (MSPK…LQEM) and 70-96 (IAEE…AAPK). The segment covering 8 to 21 (DPSSSGDSGNTNVQ) has biased composition (polar residues). The stretch at 21–77 (QEADLQEMEDVNNSLDALSCALDAVEQRTDDIMSQLRELLNSNREIRRLIAEENDNA) forms a coiled coil. Acidic residues predominate over residues 72-85 (EENDNAPESGDDNM).

This sequence belongs to the UPF0184 (EST00098) family.

In Drosophila melanogaster (Fruit fly), this protein is UPF0184 protein CG14818.